A 349-amino-acid chain; its full sequence is tRNA pseudouridine synthase D (349 aa).

Phe-27 is a substrate binding site. Asp-80 acts as the Nucleophile in catalysis. Asn-129 is a substrate binding site. A TRUD domain is found at 155–303 (GVPNYFGAQR…VEAARRAMLL (149 aa)). Phe-329 contributes to the substrate binding site.

The protein belongs to the pseudouridine synthase TruD family.

It catalyses the reaction uridine(13) in tRNA = pseudouridine(13) in tRNA. Functionally, responsible for synthesis of pseudouridine from uracil-13 in transfer RNAs. The protein is tRNA pseudouridine synthase D of Escherichia coli O81 (strain ED1a).